A 539-amino-acid polypeptide reads, in one-letter code: Probable glycerol kinase (539 aa).

A substrate-binding site is contributed by threonine 12. Arginine 16 is a binding site for ATP. Arginine 86, tyrosine 168, and aspartate 285 together coordinate substrate. ATP is bound by residues threonine 307, glycine 352, and glycine 453 to asparagine 457.

Belongs to the FGGY kinase family.

It carries out the reaction glycerol + ATP = sn-glycerol 3-phosphate + ADP + H(+). The protein operates within polyol metabolism; glycerol degradation via glycerol kinase pathway; sn-glycerol 3-phosphate from glycerol: step 1/1. This Dictyostelium discoideum (Social amoeba) protein is Probable glycerol kinase (gk).